The primary structure comprises 30 residues: Phospholemman-like protein (30 aa).

It belongs to the FXYD family. In terms of processing, phosphorylated by protein kinase a (PK-A) and protein kinase C (PK-C). Phosphorylated in response to insulin and adrenergic stimulation.

It localises to the microsome membrane. Its subcellular location is the endoplasmic reticulum membrane. Functionally, induces a hyperpolarization-activated chloride current when expressed in Xenopus oocytes. May have a functional role in muscle contraction. The protein is Phospholemman-like protein of Squalus acanthias (Spiny dogfish).